Reading from the N-terminus, the 361-residue chain is Deoxyhypusine hydroxylase (361 aa).

4 HEAT-like PBS-type repeats span residues 59–85, 94–120, 183–211, and 216–242; these read LKHE…VLEN, VRHE…YMQD, QRYR…GFRD, and FRHE…RLRD. Positions 61, 62, 96, and 97 each coordinate Fe cation. 4 residues coordinate Fe cation: His-218, Glu-219, His-251, and Glu-252.

It belongs to the deoxyhypusine hydroxylase family. Requires Fe(2+) as cofactor.

The protein resides in the cytoplasm. Its subcellular location is the nucleus. The catalysed reaction is [eIF5A protein]-deoxyhypusine + AH2 + O2 = [eIF5A protein]-hypusine + A + H2O. The protein operates within protein modification; eIF5A hypusination. In terms of biological role, catalyzes the hydroxylation of the N(6)-(4-aminobutyl)-L-lysine intermediate to form hypusine, an essential post-translational modification only found in mature eIF-5A factor. The sequence is that of Deoxyhypusine hydroxylase from Cryptococcus neoformans var. neoformans serotype D (strain JEC21 / ATCC MYA-565) (Filobasidiella neoformans).